The sequence spans 644 residues: DNA mismatch repair protein MutL (644 aa).

This sequence belongs to the DNA mismatch repair MutL/HexB family.

Its function is as follows. This protein is involved in the repair of mismatches in DNA. It is required for dam-dependent methyl-directed DNA mismatch repair. May act as a 'molecular matchmaker', a protein that promotes the formation of a stable complex between two or more DNA-binding proteins in an ATP-dependent manner without itself being part of a final effector complex. The sequence is that of DNA mismatch repair protein MutL from Chlorobium chlorochromatii (strain CaD3).